The primary structure comprises 477 residues: UDP-galactose-lipid carrier transferase (477 aa).

Helical transmembrane passes span 16–36 (SLAL…IVLI), 52–72 (LDLK…WFWV), 93–113 (TILI…WELS), 115–135 (WIWI…RACV), 175–195 (VIAF…GVPV), and 284–304 (FDLV…VILI). Topologically, residues 305–477 (FMVSRDGGAP…GVVLKRDGAY (173 aa)) are cytoplasmic.

The protein belongs to the bacterial sugar transferase family.

It is found in the cell membrane. Its pathway is glycan metabolism; exopolysaccharide biosynthesis. Functionally, involved in the biosynthesis of amylovoran which functions as a virulence factor. May act as a sugar transferase and may be involved in the export of the repeating unit by flipping the lipid carrier to the periplasmic face of the inner membrane. The protein is UDP-galactose-lipid carrier transferase (amsG) of Erwinia amylovora (Fire blight bacteria).